A 764-amino-acid chain; its full sequence is Aconitate hydratase (764 aa).

Residue 75–77 (DSH) coordinates substrate. Residues Cys-307, Cys-372, and Cys-375 each coordinate [4Fe-4S] cluster. Substrate-binding positions include Arg-405, Arg-410, Arg-568, and 648–649 (SR).

Belongs to the aconitase/IPM isomerase family. [4Fe-4S] cluster is required as a cofactor.

Its subcellular location is the cytoplasm. The catalysed reaction is citrate = D-threo-isocitrate. The protein operates within carbohydrate metabolism; glyoxylate and dicarboxylate metabolism. Its function is as follows. Catalyzes the isomerization of citrate to isocitrate via cis-aconitate. In Cucumis melo var. conomon (Oriental pickling melon), this protein is Aconitate hydratase (ACO).